Consider the following 379-residue polypeptide: Putative F-box protein At2g33190 (379 aa).

Residues 6–53 enclose the F-box domain; the sequence is NGWSKLYPDLLRSIFESLSCLDFHRAGTVCSNWYAVSRSCPLYPWRIV.

This chain is Putative F-box protein At2g33190, found in Arabidopsis thaliana (Mouse-ear cress).